Consider the following 330-residue polypeptide: Probable NAD(P)H-dependent D-xylose reductase xyl1 (330 aa).

Tyrosine 50 (proton donor) is an active-site residue. Histidine 112 provides a ligand contact to substrate. NAD(+)-binding positions include 166-167 (SN), 215-224 (SSFGPLSFLE), and 271-281 (KSNNPTRLAQN).

Belongs to the aldo/keto reductase family.

The catalysed reaction is xylitol + NAD(+) = D-xylose + NADH + H(+). It catalyses the reaction xylitol + NADP(+) = D-xylose + NADPH + H(+). It functions in the pathway carbohydrate metabolism; D-xylose degradation. In terms of biological role, catalyzes the initial reaction in the xylose utilization pathway by reducing D-xylose into xylitol. Xylose is a major component of hemicelluloses such as xylan. Most fungi utilize D-xylose via three enzymatic reactions, xylose reductase (XR), xylitol dehydrogenase (XDH), and xylulokinase, to form xylulose 5-phosphate, which enters pentose phosphate pathway. In Aspergillus clavatus (strain ATCC 1007 / CBS 513.65 / DSM 816 / NCTC 3887 / NRRL 1 / QM 1276 / 107), this protein is Probable NAD(P)H-dependent D-xylose reductase xyl1 (xyl1).